We begin with the raw amino-acid sequence, 244 residues long: Na(+)-translocating NADH-quinone reductase subunit E (244 aa).

A run of 6 helical transmembrane segments spans residues 11-31 (LLGI…TFLG), 50-70 (MSVA…HYFI), 90-110 (FLEL…LELL), 123-143 (GIFL…LFGI), 153-173 (VVFS…FATI), and 191-211 (ISFI…GIDI).

Belongs to the NqrDE/RnfAE family. In terms of assembly, composed of six subunits; NqrA, NqrB, NqrC, NqrD, NqrE and NqrF.

It localises to the cell inner membrane. The enzyme catalyses a ubiquinone + n Na(+)(in) + NADH + H(+) = a ubiquinol + n Na(+)(out) + NAD(+). NQR complex catalyzes the reduction of ubiquinone-1 to ubiquinol by two successive reactions, coupled with the transport of Na(+) ions from the cytoplasm to the periplasm. NqrA to NqrE are probably involved in the second step, the conversion of ubisemiquinone to ubiquinol. This is Na(+)-translocating NADH-quinone reductase subunit E from Chlamydia trachomatis serovar L2 (strain ATCC VR-902B / DSM 19102 / 434/Bu).